A 111-amino-acid polypeptide reads, in one-letter code: WAP four-disulfide core domain protein 12 (111 aa).

Positions 1–23 (MGSSSFLVLMVSLALVTLVAAEG) are cleaved as a signal peptide. The region spanning 27-74 (NIEKPGVCPADNIRCIKSDPPQCHTDQDCQGIRKCCYLHCGFKCVIPV) is the WAP domain. Disulfide bonds link Cys34–Cys62, Cys41–Cys66, Cys49–Cys61, and Cys55–Cys70. The disordered stretch occupies residues 80 to 111 (GGNKDEDVSRPCPEPGWEAKPPGVFSTRCPQK).

The protein resides in the secreted. Antibacterial protein. Putative acid-stable proteinase inhibitor. This is WAP four-disulfide core domain protein 12 (WFDC12) from Callithrix jacchus (White-tufted-ear marmoset).